Here is a 383-residue protein sequence, read N- to C-terminus: Sulfate adenylyltransferase (383 aa).

Belongs to the sulfate adenylyltransferase family.

The enzyme catalyses sulfate + ATP + H(+) = adenosine 5'-phosphosulfate + diphosphate. It functions in the pathway sulfur metabolism; hydrogen sulfide biosynthesis; sulfite from sulfate: step 1/3. The protein is Sulfate adenylyltransferase of Halothermothrix orenii (strain H 168 / OCM 544 / DSM 9562).